The chain runs to 648 residues: Phosphatidylinositol polyphosphate 5-phosphatase type IV (648 aa).

The disordered stretch occupies residues 1–64 (MPSKSACLRH…PLSMPAKPSN (64 aa)). Residues 36–54 (TSASLPAADSQSSQTNSMP) are compositionally biased toward polar residues. 2 repeat units span residues 59–62 (PAKP) and 76–79 (PQPP). Residues 59-243 (PAKPSNQNLQ…AHSNLGPSRP (185 aa)) are 4 X 4 AA repeats of P-X-X-P. The disordered stretch occupies residues 99–158 (RFRGSQEDLTVQNGASPCRGSLQDSVAQSPAYSRPLPCLSTSLQEIPKPRRATGSEGGSP). Serine 103 is modified (phosphoserine). A compositionally biased stretch (polar residues) spans 120 to 129 (LQDSVAQSPA). The stretch at 147 to 150 (PRRA) is repeat 3. Residue threonine 197 is modified to Phosphothreonine. Repeat unit 4 spans residues 240 to 243 (PSRP). Phosphoserine is present on residues serine 245 and serine 260. Cysteine 645 carries the post-translational modification Cysteine methyl ester. Residue cysteine 645 is the site of S-farnesyl cysteine attachment. Positions 646-648 (TVS) are cleaved as a propeptide — removed in mature form.

The protein belongs to the inositol 1,4,5-trisphosphate 5-phosphatase type IV family. In terms of assembly, interacts (when prenylated) with PDE6D; this is important for normal location in cilia.

The protein resides in the cytoplasm. It is found in the cytoskeleton. It localises to the cilium axoneme. Its subcellular location is the golgi apparatus. The protein localises to the golgi stack membrane. The protein resides in the cell membrane. It is found in the cell projection. It localises to the ruffle. Its subcellular location is the nucleus. It carries out the reaction a 1,2-diacyl-sn-glycero-3-phospho-(1D-myo-inositol-4,5-bisphosphate) + H2O = a 1,2-diacyl-sn-glycero-3-phospho-(1D-myo-inositol 4-phosphate) + phosphate. It catalyses the reaction a 1,2-diacyl-sn-glycero-3-phospho-(1D-myo-inositol-3,4,5-trisphosphate) + H2O = a 1,2-diacyl-sn-glycero-3-phospho-(1D-myo-inositol-3,4-bisphosphate) + phosphate. The enzyme catalyses a 1,2-diacyl-sn-glycero-3-phospho-(1D-myo-inositol-3,5-bisphosphate) + H2O = a 1,2-diacyl-sn-glycero-3-phospho-(1D-myo-inositol-3-phosphate) + phosphate. Functionally, phosphatidylinositol (PtdIns) phosphatase that specifically hydrolyzes the 5-phosphate of phosphatidylinositol-3,4,5-trisphosphate (PtdIns(3,4,5)P3), phosphatidylinositol 4,5-bisphosphate PtdIns (4,5)P2 and phosphatidylinositol 3,5-bisphosphate (PtdIns(3,5)P2). Specific for lipid substrates, inactive towards water soluble inositol phosphates. Plays an essential role in the primary cilium by controlling ciliary growth and phosphoinositide 3-kinase (PI3K) signaling and stability. The protein is Phosphatidylinositol polyphosphate 5-phosphatase type IV (Inpp5e) of Rattus norvegicus (Rat).